The chain runs to 279 residues: Pantothenate synthetase (279 aa).

Residue 31–38 (MGALHEGH) participates in ATP binding. His38 serves as the catalytic Proton donor. (R)-pantoate is bound at residue Gln62. A beta-alanine-binding site is contributed by Gln62. An ATP-binding site is contributed by 148–151 (GEKD). (R)-pantoate is bound at residue Gln154. Residues Val177 and 185–188 (LSSR) each bind ATP.

This sequence belongs to the pantothenate synthetase family. As to quaternary structure, homodimer.

The protein resides in the cytoplasm. It carries out the reaction (R)-pantoate + beta-alanine + ATP = (R)-pantothenate + AMP + diphosphate + H(+). Its pathway is cofactor biosynthesis; (R)-pantothenate biosynthesis; (R)-pantothenate from (R)-pantoate and beta-alanine: step 1/1. Its function is as follows. Catalyzes the condensation of pantoate with beta-alanine in an ATP-dependent reaction via a pantoyl-adenylate intermediate. The protein is Pantothenate synthetase of Cereibacter sphaeroides (strain ATCC 17023 / DSM 158 / JCM 6121 / CCUG 31486 / LMG 2827 / NBRC 12203 / NCIMB 8253 / ATH 2.4.1.) (Rhodobacter sphaeroides).